Reading from the N-terminus, the 25-residue chain is LDVKKIICVACKIRPNPACKKICPK.

2 disulfides stabilise this stretch: Cys8-Cys23 and Cys11-Cys19.

The protein localises to the target cell membrane. Its subcellular location is the secreted. In terms of biological role, antimicrobial peptide active against Gram-positive bacteria M.luteus (MIC=0.8 uM) and B.subtilis (MIC=1.5 uM). Less active against Gram-negative bacteria E.coli (MIC=32.5 uM) and yeast C.albicans (MIC=18.7 uM). Not active against S.aureus and P.aeruginosa. Has no hemolytic activity against human erythrocytes. Probably acts by disrupting membranes of target cells. This Panurgus calcaratus (Solitary bee) protein is Panurgine R.